The chain runs to 254 residues: Trans-aconitate 2-methyltransferase (254 aa).

Belongs to the methyltransferase superfamily. Tam family.

It is found in the cytoplasm. It carries out the reaction trans-aconitate + S-adenosyl-L-methionine = (E)-3-(methoxycarbonyl)pent-2-enedioate + S-adenosyl-L-homocysteine. Catalyzes the S-adenosylmethionine monomethyl esterification of trans-aconitate. The polypeptide is Trans-aconitate 2-methyltransferase (Rhodococcus jostii (strain RHA1)).